A 91-amino-acid polypeptide reads, in one-letter code: Small ribosomal subunit protein uS19 (91 aa).

Belongs to the universal ribosomal protein uS19 family.

Protein S19 forms a complex with S13 that binds strongly to the 16S ribosomal RNA. The chain is Small ribosomal subunit protein uS19 from Sphingopyxis alaskensis (strain DSM 13593 / LMG 18877 / RB2256) (Sphingomonas alaskensis).